We begin with the raw amino-acid sequence, 473 residues long: H(+)/Cl(-) exchange transporter ClcA (473 aa).

The Cytoplasmic portion of the chain corresponds to 1-32 (MKTDTSTFLAQQIVRLRRRDQIRRLMQRDKTP). Residues 33 to 69 (LAILFMAAVVGTLTGLVGVAFEKAVSWVQNMRIGALV) traverse the membrane as a helical segment. Over 70 to 76 (QVADHAF) the chain is Periplasmic. A helical transmembrane segment spans residues 77–100 (LLWPLAFILSALLAMVGYFLVRKF). A Selectivity filter part_1 motif is present at residues 106–110 (GSGIP). Serine 107 is a binding site for chloride. Residues 109–116 (IPEIEGAL) constitute an intramembrane region (helical). Residues 117–123 (EELRPVR) lie on the Cytoplasmic side of the membrane. Helical transmembrane passes span 124-141 (WWRV…TLGA) and 148-166 (EGPT…LDVF). The Selectivity filter part_2 signature appears at 146–150 (GREGP). The Cytoplasmic segment spans residues 167–176 (RMRSAEARHT). Intramembrane regions (helical) lie at residues 177–189 (LLAT…LSAA) and 193–201 (PLAGILFII). Over 202–214 (EEMRPQFRYNLIS) the chain is Cytoplasmic. Residues 215 to 232 (IKAVFTGVIMSSIVFRIF) traverse the membrane as a helical segment. The Periplasmic portion of the chain corresponds to 233–252 (NGEAPIIEVGKLSDAPVNTL). The chain crosses the membrane as a helical span at residues 253–281 (WLYLILGIIFGCVGPVFNSLVLRTQDMFQ). Residues 282–287 (RFHGGE) are Cytoplasmic-facing. Residues 288–309 (IKKWVLMGGAIGGLCGILGLIE) traverse the membrane as a helical segment. Topologically, residues 310-329 (PEAAGGGFNLIPIAAAGNFS) are periplasmic. Transmembrane regions (helical) follow at residues 330 to 349 (VGLL…LCFS) and 355 to 376 (GIFA…MAAA). Positions 355–359 (GIFAP) match the Selectivity filter part_3 motif. 2 residues coordinate chloride: isoleucine 356 and phenylalanine 357. Topologically, residues 377-386 (VLFPQYHLEA) are periplasmic. Positions 387-401 (GTFAIAGMGALMAAS) form an intramembrane region, helical. Residues 402 to 404 (VRA) constitute an intramembrane region (note=Loop between two helices). Positions 405-416 (PLTGIVLVLEMT) form an intramembrane region, helical. The note=Loop between two helices intramembrane region spans 417-421 (DNYQL). A helical transmembrane segment spans residues 422 to 438 (ILPMIITCLGATLLAQF). Residues 439 to 473 (LGGKPLYSTILARTLAKQDAEQAAKNQNAPAGENT) are Cytoplasmic-facing. Tyrosine 445 contacts chloride.

Belongs to the chloride channel (TC 2.A.49) family. ClcA subfamily. Homodimer.

Its subcellular location is the cell inner membrane. The enzyme catalyses 2 chloride(in) + H(+)(out) = 2 chloride(out) + H(+)(in). Functionally, proton-coupled chloride transporter. Functions as antiport system and exchanges two chloride ions for 1 proton. Probably acts as an electrical shunt for an outwardly-directed proton pump that is linked to amino acid decarboxylation, as part of the extreme acid resistance (XAR) response. In Salmonella agona (strain SL483), this protein is H(+)/Cl(-) exchange transporter ClcA.